We begin with the raw amino-acid sequence, 103 residues long: Large ribosomal subunit protein uL24 (103 aa).

Belongs to the universal ribosomal protein uL24 family. As to quaternary structure, part of the 50S ribosomal subunit.

Functionally, one of two assembly initiator proteins, it binds directly to the 5'-end of the 23S rRNA, where it nucleates assembly of the 50S subunit. One of the proteins that surrounds the polypeptide exit tunnel on the outside of the subunit. This chain is Large ribosomal subunit protein uL24, found in Geobacillus sp. (strain WCH70).